A 179-amino-acid polypeptide reads, in one-letter code: MLNTLFILAAEAHEAGEGGFGINLDFLEANLFNLAILLGIIIYYAPKTLGKILGDRRQKIADAIEEAETRQRKSAQILAEEEKKLAQAKAEAARIVQEAGQRAEVAKQEIATQTEADLRRMQEAAAQDLGAEQERVIAELKRRIAEQAVAKAEADLRDRLNEDTQDRLIERSIAQLGGR.

The chain crosses the membrane as a helical span at residues 26–46 (FLEANLFNLAILLGIIIYYAP).

It belongs to the ATPase B chain family. In terms of assembly, F-type ATPases have 2 components, F(1) - the catalytic core - and F(0) - the membrane proton channel. F(1) has five subunits: alpha(3), beta(3), gamma(1), delta(1), epsilon(1). F(0) has four main subunits: a(1), b(1), b'(1) and c(10-14). The alpha and beta chains form an alternating ring which encloses part of the gamma chain. F(1) is attached to F(0) by a central stalk formed by the gamma and epsilon chains, while a peripheral stalk is formed by the delta, b and b' chains.

It localises to the cellular thylakoid membrane. F(1)F(0) ATP synthase produces ATP from ADP in the presence of a proton or sodium gradient. F-type ATPases consist of two structural domains, F(1) containing the extramembraneous catalytic core and F(0) containing the membrane proton channel, linked together by a central stalk and a peripheral stalk. During catalysis, ATP synthesis in the catalytic domain of F(1) is coupled via a rotary mechanism of the central stalk subunits to proton translocation. Functionally, component of the F(0) channel, it forms part of the peripheral stalk, linking F(1) to F(0). This Synechocystis sp. (strain ATCC 27184 / PCC 6803 / Kazusa) protein is ATP synthase subunit b.